A 319-amino-acid polypeptide reads, in one-letter code: Ribonuclease Z (319 aa).

Zn(2+)-binding residues include His-62, His-64, Asp-66, His-67, His-139, Asp-209, and His-268. Asp-66 functions as the Proton acceptor in the catalytic mechanism.

Belongs to the RNase Z family. In terms of assembly, homodimer. The cofactor is Zn(2+).

The catalysed reaction is Endonucleolytic cleavage of RNA, removing extra 3' nucleotides from tRNA precursor, generating 3' termini of tRNAs. A 3'-hydroxy group is left at the tRNA terminus and a 5'-phosphoryl group is left at the trailer molecule.. Its function is as follows. Zinc phosphodiesterase, which displays some tRNA 3'-processing endonuclease activity. Probably involved in tRNA maturation, by removing a 3'-trailer from precursor tRNA. The protein is Ribonuclease Z of Pseudomonas putida (strain ATCC 700007 / DSM 6899 / JCM 31910 / BCRC 17059 / LMG 24140 / F1).